Reading from the N-terminus, the 382-residue chain is Dual-specificity RNA methyltransferase RlmN (382 aa).

The active-site Proton acceptor is glutamate 96. The 241-residue stretch at 102–342 (QGKRGTLCVS…VRTTRGEDID (241 aa)) folds into the Radical SAM core domain. A disulfide bond links cysteine 109 and cysteine 345. Cysteine 116, cysteine 120, and cysteine 123 together coordinate [4Fe-4S] cluster. Residues 170-171 (GE), serine 202, 224-226 (SLH), and asparagine 302 each bind S-adenosyl-L-methionine. Cysteine 345 (S-methylcysteine intermediate) is an active-site residue.

It belongs to the radical SAM superfamily. RlmN family. The cofactor is [4Fe-4S] cluster.

The protein localises to the cytoplasm. The catalysed reaction is adenosine(2503) in 23S rRNA + 2 reduced [2Fe-2S]-[ferredoxin] + 2 S-adenosyl-L-methionine = 2-methyladenosine(2503) in 23S rRNA + 5'-deoxyadenosine + L-methionine + 2 oxidized [2Fe-2S]-[ferredoxin] + S-adenosyl-L-homocysteine. The enzyme catalyses adenosine(37) in tRNA + 2 reduced [2Fe-2S]-[ferredoxin] + 2 S-adenosyl-L-methionine = 2-methyladenosine(37) in tRNA + 5'-deoxyadenosine + L-methionine + 2 oxidized [2Fe-2S]-[ferredoxin] + S-adenosyl-L-homocysteine. In terms of biological role, specifically methylates position 2 of adenine 2503 in 23S rRNA and position 2 of adenine 37 in tRNAs. m2A2503 modification seems to play a crucial role in the proofreading step occurring at the peptidyl transferase center and thus would serve to optimize ribosomal fidelity. The protein is Dual-specificity RNA methyltransferase RlmN of Pseudomonas savastanoi pv. phaseolicola (strain 1448A / Race 6) (Pseudomonas syringae pv. phaseolicola (strain 1448A / Race 6)).